A 318-amino-acid polypeptide reads, in one-letter code: Aspartate carbamoyltransferase catalytic subunit (318 aa).

Carbamoyl phosphate-binding residues include R54 and T55. K82 contacts L-aspartate. Carbamoyl phosphate-binding residues include R104, H134, and Q137. L-aspartate-binding residues include R174 and R230. Carbamoyl phosphate contacts are provided by G271 and P272.

The protein belongs to the aspartate/ornithine carbamoyltransferase superfamily. ATCase family. In terms of assembly, heterododecamer (2C3:3R2) of six catalytic PyrB chains organized as two trimers (C3), and six regulatory PyrI chains organized as three dimers (R2).

It catalyses the reaction carbamoyl phosphate + L-aspartate = N-carbamoyl-L-aspartate + phosphate + H(+). It participates in pyrimidine metabolism; UMP biosynthesis via de novo pathway; (S)-dihydroorotate from bicarbonate: step 2/3. In terms of biological role, catalyzes the condensation of carbamoyl phosphate and aspartate to form carbamoyl aspartate and inorganic phosphate, the committed step in the de novo pyrimidine nucleotide biosynthesis pathway. In Clavibacter michiganensis subsp. michiganensis (strain NCPPB 382), this protein is Aspartate carbamoyltransferase catalytic subunit.